The primary structure comprises 1003 residues: Glycine--tRNA ligase (1003 aa).

The tract at residues 1–310 (MSSQPLTLQA…VTPKKIPTIC (310 aa)) is glycine--tRNA ligase alpha subunit. Positions 311 to 1003 (QPEDFLLEIG…CFGFYAWDVL (693 aa)) are glycine--tRNA ligase beta subunit.

The protein belongs to the class-II aminoacyl-tRNA synthetase family.

The protein localises to the cytoplasm. It catalyses the reaction tRNA(Gly) + glycine + ATP = glycyl-tRNA(Gly) + AMP + diphosphate. This Chlamydia trachomatis serovar L2 (strain ATCC VR-902B / DSM 19102 / 434/Bu) protein is Glycine--tRNA ligase (glyQS).